The sequence spans 348 residues: Flagellar P-ring protein (348 aa).

The N-terminal stretch at 1-24 (MRRKNNNKIWIWVATLILSISALY) is a signal peptide.

This sequence belongs to the FlgI family. In terms of assembly, the basal body constitutes a major portion of the flagellar organelle and consists of four rings (L,P,S, and M) mounted on a central rod.

The protein resides in the periplasm. Its subcellular location is the bacterial flagellum basal body. In terms of biological role, assembles around the rod to form the L-ring and probably protects the motor/basal body from shearing forces during rotation. The sequence is that of Flagellar P-ring protein from Helicobacter hepaticus (strain ATCC 51449 / 3B1).